Consider the following 973-residue polypeptide: Putative cell agglutination protein pfl3 (973 aa).

The first 24 residues, 1–24 (MSLFPQILLRLLFLAFTLKSTSNA), serve as a signal peptide directing secretion. N-linked (GlcNAc...) asparagine glycans are attached at residues asparagine 75, asparagine 96, asparagine 147, asparagine 171, asparagine 184, asparagine 218, and asparagine 253. 18 repeat units span residues 198-232 (GTIT…IPTA), 233-267 (GTVT…IPTA), 268-302 (GTRT…LPTA), 303-337 (GTNT…YPTA), 338-372 (GMVT…IPTA), 373-407 (GTVT…IPTA), 408-442 (GTRT…LPTA), 443-477 (GTNT…EPTA), 478-512 (GVVT…EPTA), 513-547 (GVVT…EPTA), 548-582 (GVVT…EPTA), 583-617 (GVVT…EPTA), 618-652 (GVVT…EPTA), 653-687 (GVVT…EPTA), 688-722 (GVVT…EPTA), 723-757 (GVVT…EPTA), 758-792 (GVVT…EPTA), and 793-828 (GYVT…VPSL). Residues 198–828 (GTITLTTISG…GTVLQVVPSL (631 aa)) form an 18 X 35 AA approximate tandem repeats region. N-linked (GlcNAc...) asparagine glycans are attached at residues asparagine 352 and asparagine 393. The DIPSY domain occupies 820–973 (TVLQVVPSLF…SNVYFKAVPL (154 aa)). Asparagine 848 carries N-linked (GlcNAc...) asparagine glycosylation.

This sequence belongs to the mam3/map4 family.

The protein localises to the cell surface. In terms of biological role, may be involved in agglutination during conjugation or other aspects of colony formation. Induces flocculation when overexpressed. In Schizosaccharomyces pombe (strain 972 / ATCC 24843) (Fission yeast), this protein is Putative cell agglutination protein pfl3.